Here is a 631-residue protein sequence, read N- to C-terminus: 1-deoxy-D-xylulose-5-phosphate synthase (631 aa).

Residues histidine 87 and 128–130 (GHS) each bind thiamine diphosphate. A Mg(2+)-binding site is contributed by aspartate 159. Residues 160 to 161 (GA), asparagine 188, phenylalanine 295, and glutamate 377 contribute to the thiamine diphosphate site. Asparagine 188 contributes to the Mg(2+) binding site.

This sequence belongs to the transketolase family. DXPS subfamily. In terms of assembly, homodimer. Mg(2+) serves as cofactor. Thiamine diphosphate is required as a cofactor.

The catalysed reaction is D-glyceraldehyde 3-phosphate + pyruvate + H(+) = 1-deoxy-D-xylulose 5-phosphate + CO2. The protein operates within metabolic intermediate biosynthesis; 1-deoxy-D-xylulose 5-phosphate biosynthesis; 1-deoxy-D-xylulose 5-phosphate from D-glyceraldehyde 3-phosphate and pyruvate: step 1/1. Its function is as follows. Catalyzes the acyloin condensation reaction between C atoms 2 and 3 of pyruvate and glyceraldehyde 3-phosphate to yield 1-deoxy-D-xylulose-5-phosphate (DXP). The polypeptide is 1-deoxy-D-xylulose-5-phosphate synthase (Pseudomonas putida (strain W619)).